Consider the following 227-residue polypeptide: MKRNVVLQLTGVERHYGQGGTLLSILKGADFSISKGEIVALVAPSGTGKSTLLHVAGLLEHPDGGEVNINGHACDGLSDEKRTAIRRSQIGFVYQFHHLLPEFSALENIMMPQLIAGLSWKEAGERAGQLLDYMRIGHRGSHRPGELSGGEQQRVAIARAVANAPTLLLADEPTGNLDPETASYVFDALEALVRQSGLAALIATHNHELARRMDRRVTISDGKIVDF.

Residues 7–227 (LQLTGVERHY…TISDGKIVDF (221 aa)) enclose the ABC transporter domain. Position 43–50 (43–50 (APSGTGKS)) interacts with ATP.

The protein belongs to the ABC transporter superfamily. Lipoprotein translocase (TC 3.A.1.125) family. As to quaternary structure, the complex is composed of two ATP-binding proteins (LolD) and two transmembrane proteins (LolC and LolE).

It is found in the cell inner membrane. Part of the ABC transporter complex LolCDE involved in the translocation of mature outer membrane-directed lipoproteins, from the inner membrane to the periplasmic chaperone, LolA. Responsible for the formation of the LolA-lipoprotein complex in an ATP-dependent manner. This chain is Lipoprotein-releasing system ATP-binding protein LolD, found in Rhizobium johnstonii (strain DSM 114642 / LMG 32736 / 3841) (Rhizobium leguminosarum bv. viciae).